Consider the following 268-residue polypeptide: MGTEKESPEPDCQKQFQAAVSVIQNLPKNGSYRPSYEEMLRFYSYYKQATMGPCLVPRPGFWDPIGRYKWDAWNSLGKMSREEAMSAYITEMKLVAQKVIDTVPLGEVAEDMFGYFEPLYQVIPDMPRPPETFLRRVTGWKEQVVNGDVGAVSEPPCLPKEPAPPSPESHSPRDLDSEVFCDSLEQLEPELSSGQHLEESVIPGTAPCPPQRKRGCGAARRGPRSWTCGCWGQFEHYRRACRRCRRGCRAWRACPGPLSSLTLSVRLE.

An ACB domain is found at 12-101 (CQKQFQAAVS…MKLVAQKVID (90 aa)). An acyl-CoA-binding positions include 23-32 (IQNLPKNGSY), 43-47 (YSYYK), Lys69, and Tyr88. A disordered region spans residues 151-175 (AVSEPPCLPKEPAPPSPESHSPRDL). Pro residues predominate over residues 156 to 167 (PCLPKEPAPPSP). Phosphoserine is present on residues Ser166 and Ser171.

Binds medium- and long-chain acyl-CoA esters and may function as an intracellular carrier of acyl-CoA esters. The chain is Acyl-CoA-binding domain-containing protein 4 (ACBD4) from Homo sapiens (Human).